Consider the following 82-residue polypeptide: Putative defensin-like protein 191 (82 aa).

A signal peptide spans 1–28 (MAKSVNATGFITYMVIFLILTGISRVKA). 4 disulfide bridges follow: Cys33/Cys79, Cys46/Cys65, Cys51/Cys74, and Cys55/Cys76.

It belongs to the DEFL family.

It localises to the secreted. The polypeptide is Putative defensin-like protein 191 (Arabidopsis thaliana (Mouse-ear cress)).